Here is a 669-residue protein sequence, read N- to C-terminus: DNA mismatch repair protein MutL (669 aa).

Residues 361–409 (ENVFSQPYQAPVTSSTQKKSTGAYQGSAGKGLTDTQKSPQKTLDTRQFG) are disordered. 2 stretches are compositionally biased toward polar residues: residues 363–384 (VFSQ…TGAY) and 393–402 (TDTQKSPQKT).

The protein belongs to the DNA mismatch repair MutL/HexB family.

Its function is as follows. This protein is involved in the repair of mismatches in DNA. It is required for dam-dependent methyl-directed DNA mismatch repair. May act as a 'molecular matchmaker', a protein that promotes the formation of a stable complex between two or more DNA-binding proteins in an ATP-dependent manner without itself being part of a final effector complex. This Proteus mirabilis (strain HI4320) protein is DNA mismatch repair protein MutL.